The primary structure comprises 197 residues: Probable molybdenum cofactor guanylyltransferase (197 aa).

Residues 12–14 (LAG), lysine 24, aspartate 71, and aspartate 103 contribute to the GTP site. Aspartate 103 provides a ligand contact to Mg(2+).

This sequence belongs to the MobA family. Mg(2+) serves as cofactor.

Its subcellular location is the cytoplasm. The catalysed reaction is Mo-molybdopterin + GTP + H(+) = Mo-molybdopterin guanine dinucleotide + diphosphate. Its function is as follows. Transfers a GMP moiety from GTP to Mo-molybdopterin (Mo-MPT) cofactor (Moco or molybdenum cofactor) to form Mo-molybdopterin guanine dinucleotide (Mo-MGD) cofactor. The protein is Probable molybdenum cofactor guanylyltransferase of Mycolicibacterium paratuberculosis (strain ATCC BAA-968 / K-10) (Mycobacterium paratuberculosis).